We begin with the raw amino-acid sequence, 333 residues long: Biotin synthase (333 aa).

The region spanning 54-283 (FCSNTFDMCS…RAFIRLAGGR (230 aa)) is the Radical SAM core domain. Residues Cys72, Cys76, and Cys79 each coordinate [4Fe-4S] cluster. [2Fe-2S] cluster contacts are provided by Ser116, Cys148, Cys208, and Arg278.

Belongs to the radical SAM superfamily. Biotin synthase family. Homodimer. Requires [4Fe-4S] cluster as cofactor. [2Fe-2S] cluster is required as a cofactor.

The catalysed reaction is (4R,5S)-dethiobiotin + (sulfur carrier)-SH + 2 reduced [2Fe-2S]-[ferredoxin] + 2 S-adenosyl-L-methionine = (sulfur carrier)-H + biotin + 2 5'-deoxyadenosine + 2 L-methionine + 2 oxidized [2Fe-2S]-[ferredoxin]. It participates in cofactor biosynthesis; biotin biosynthesis; biotin from 7,8-diaminononanoate: step 2/2. In terms of biological role, catalyzes the conversion of dethiobiotin (DTB) to biotin by the insertion of a sulfur atom into dethiobiotin via a radical-based mechanism. The chain is Biotin synthase from Brachyspira hyodysenteriae (strain ATCC 49526 / WA1).